Here is a 241-residue protein sequence, read N- to C-terminus: NEP1-interacting protein 2 (241 aa).

The disordered stretch occupies residues 1–20 (MASSSSSSYRFQSGSYPLSS). Residues 1–36 (MASSSSSSYRFQSGSYPLSSSPSLGNFVERIKDACH) lie on the Lumenal, thylakoid side of the membrane. The helical transmembrane segment at 37–57 (FLVSAVLGTIISAILTFFFAL) threads the bilayer. At 58-76 (VGTLLGALTGALIGQETES) the chain is on the stromal side. Residues 77–97 (GFIRGAAIGAISGAVFSIEVF) form a helical membrane-spanning segment. At 98–109 (ESSLDLWKSDES) the chain is on the lumenal, thylakoid side. Residues 110-130 (GFGCFLYLIDVIVSLLSGRLV) traverse the membrane as a helical segment. Residues 131 to 241 (RERIGPAMLS…GSCPMCRRDI (111 aa)) lie on the Stromal side of the membrane. An RING-type; atypical zinc finger spans residues 196–238 (CSVCLQDFQLGETVRSLPHCHHMFHLPCIDNWLLRHGSCPMCR).

The protein belongs to the RING-type zinc finger family. NIP subfamily. In terms of assembly, interacts with RPOT2.

It localises to the plastid. Its subcellular location is the chloroplast thylakoid membrane. Intrinsic thylakoid membrane protein that fixes RPOT2 on the stromal side of the thylakoid membrane. This chain is NEP1-interacting protein 2 (NIP2), found in Arabidopsis thaliana (Mouse-ear cress).